The chain runs to 330 residues: Glycerol-3-phosphate dehydrogenase [NAD(P)+] (330 aa).

Residues serine 14, phenylalanine 15, arginine 35, and lysine 109 each coordinate NADPH. Positions 109 and 137 each coordinate sn-glycerol 3-phosphate. Alanine 141 is an NADPH binding site. Sn-glycerol 3-phosphate is bound by residues lysine 192, aspartate 248, serine 258, arginine 259, and asparagine 260. The Proton acceptor role is filled by lysine 192. Position 259 (arginine 259) interacts with NADPH. NADPH contacts are provided by leucine 283 and glutamate 285.

Belongs to the NAD-dependent glycerol-3-phosphate dehydrogenase family.

The protein resides in the cytoplasm. It catalyses the reaction sn-glycerol 3-phosphate + NAD(+) = dihydroxyacetone phosphate + NADH + H(+). It carries out the reaction sn-glycerol 3-phosphate + NADP(+) = dihydroxyacetone phosphate + NADPH + H(+). It participates in membrane lipid metabolism; glycerophospholipid metabolism. In terms of biological role, catalyzes the reduction of the glycolytic intermediate dihydroxyacetone phosphate (DHAP) to sn-glycerol 3-phosphate (G3P), the key precursor for phospholipid synthesis. The protein is Glycerol-3-phosphate dehydrogenase [NAD(P)+] of Rickettsia massiliae (strain Mtu5).